Reading from the N-terminus, the 396-residue chain is DNA polymerase IV (396 aa).

Residues 2–182 (ILHVDMDAFY…LPVSRLWGVG (181 aa)) form the UmuC domain. 2 residues coordinate Mg(2+): aspartate 6 and aspartate 100. Glutamate 101 is an active-site residue.

The protein belongs to the DNA polymerase type-Y family. Monomer. The cofactor is Mg(2+).

Its subcellular location is the cytoplasm. It carries out the reaction DNA(n) + a 2'-deoxyribonucleoside 5'-triphosphate = DNA(n+1) + diphosphate. Its function is as follows. Poorly processive, error-prone DNA polymerase involved in untargeted mutagenesis. Copies undamaged DNA at stalled replication forks, which arise in vivo from mismatched or misaligned primer ends. These misaligned primers can be extended by PolIV. Exhibits no 3'-5' exonuclease (proofreading) activity. May be involved in translesional synthesis, in conjunction with the beta clamp from PolIII. The protein is DNA polymerase IV of Rhodopirellula baltica (strain DSM 10527 / NCIMB 13988 / SH1).